The primary structure comprises 550 residues: Glucose-6-phosphate isomerase (550 aa).

The active-site Proton donor is Glu-357. Catalysis depends on residues His-388 and Lys-516.

The protein belongs to the GPI family.

The protein resides in the cytoplasm. The catalysed reaction is alpha-D-glucose 6-phosphate = beta-D-fructose 6-phosphate. It participates in carbohydrate biosynthesis; gluconeogenesis. It functions in the pathway carbohydrate degradation; glycolysis; D-glyceraldehyde 3-phosphate and glycerone phosphate from D-glucose: step 2/4. Its function is as follows. Catalyzes the reversible isomerization of glucose-6-phosphate to fructose-6-phosphate. This Psychromonas ingrahamii (strain DSM 17664 / CCUG 51855 / 37) protein is Glucose-6-phosphate isomerase.